The following is a 136-amino-acid chain: Small ribosomal subunit protein uS8c (136 aa).

It belongs to the universal ribosomal protein uS8 family. In terms of assembly, part of the 30S ribosomal subunit.

It is found in the plastid. The protein localises to the chloroplast. Its function is as follows. One of the primary rRNA binding proteins, it binds directly to 16S rRNA central domain where it helps coordinate assembly of the platform of the 30S subunit. The sequence is that of Small ribosomal subunit protein uS8c (rps8) from Saccharum hybrid (Sugarcane).